Here is a 464-residue protein sequence, read N- to C-terminus: Protein FAM90A12 (464 aa).

Disordered regions lie at residues 1–42 (MMAR…DPRL), 70–389 (PATL…HDGA), and 411–437 (APSFHSPEKPGAFLAQSPHVSEKSEAP). 2 stretches are compositionally biased toward basic and acidic residues: residues 74-89 (GKKEGKENLKPWKPRA) and 97-114 (NKDKGEKEERPRQQDPQR). Positions 180 to 197 (LASLSPLRKASLSSSSSL) are enriched in low complexity.

This sequence belongs to the FAM90 family.

The sequence is that of Protein FAM90A12 from Homo sapiens (Human).